Reading from the N-terminus, the 458-residue chain is Chitin deacetylase 2 (458 aa).

An N-terminal signal peptide occupies residues 1–51 (MIPSTAAAALLTLTAGVALAHPGCGGQEIGRRNVGGPMVYRRDVTDEASAA). 3 N-linked (GlcNAc...) asparagine glycosylation sites follow: asparagine 87, asparagine 99, and asparagine 125. The region spanning 158–348 (MTWGLGFDDG…IKSAFSYIVP (191 aa)) is the NodB homology domain. Aspartate 165 acts as the Proton acceptor in catalysis. Aspartate 165 provides a ligand contact to acetate. A Co(2+)-binding site is contributed by aspartate 166. N-linked (GlcNAc...) asparagine glycosylation occurs at asparagine 169. Co(2+) is bound by residues histidine 215 and histidine 219. Tyrosine 256 provides a ligand contact to acetate. Residues asparagine 271 and asparagine 309 are each glycosylated (N-linked (GlcNAc...) asparagine). Histidine 322 acts as the Proton donor in catalysis. Asparagine 326, asparagine 354, asparagine 363, asparagine 378, and asparagine 393 each carry an N-linked (GlcNAc...) asparagine glycan. The tract at residues 382–430 (STTQKDGSSSTNTSSSGSGSAAGSASATSSSDDSSSSGSASASSSSSNA) is disordered. Residue serine 427 is the site of GPI-anchor amidated serine attachment. Positions 428–458 (SNASSGALGMFDGLSGVGLVLSGVVAGVMLL) are cleaved as a propeptide — removed in mature form. Asparagine 429 is a glycosylation site (N-linked (GlcNAc...) asparagine).

It belongs to the polysaccharide deacetylase family. Co(2+) is required as a cofactor. Glycosylated.

It localises to the secreted. It is found in the cell wall. The protein localises to the cell membrane. The catalysed reaction is [(1-&gt;4)-N-acetyl-beta-D-glucosaminyl](n) + n H2O = chitosan + n acetate. Hydrolyzes the N-acetamido groups of N-acetyl-D-glucosamine residues in chitin to form chitosan and acetate. Chitosan is required to anchor melanin to the cell wall, for maintenance of cell wall integrity, and for cytokinesis. The chain is Chitin deacetylase 2 from Cryptococcus neoformans var. neoformans serotype D (strain B-3501A) (Filobasidiella neoformans).